The primary structure comprises 374 residues: Flagellar P-ring protein (374 aa).

Residues 1-29 (MSGLGFTGVVRIAVMALLALAFLGAPAHA) form the signal peptide. Residues 296–311 (ESPQVSQPNPLSNGRT) are compositionally biased toward polar residues. The segment at 296 to 316 (ESPQVSQPNPLSNGRTVMTPR) is disordered.

Belongs to the FlgI family. In terms of assembly, the basal body constitutes a major portion of the flagellar organelle and consists of four rings (L,P,S, and M) mounted on a central rod.

It localises to the periplasm. The protein resides in the bacterial flagellum basal body. In terms of biological role, assembles around the rod to form the L-ring and probably protects the motor/basal body from shearing forces during rotation. The sequence is that of Flagellar P-ring protein from Nitrobacter winogradskyi (strain ATCC 25391 / DSM 10237 / CIP 104748 / NCIMB 11846 / Nb-255).